The primary structure comprises 104 residues: Complex III assembly factor LYRM7 (104 aa).

Ser-60 is subject to Phosphoserine.

This sequence belongs to the complex I LYR family. As to quaternary structure, interacts with UQCRFS1.

Its subcellular location is the mitochondrion matrix. Its function is as follows. Assembly factor required for Rieske Fe-S protein UQCRFS1 incorporation into the cytochrome b-c1 (CIII) complex. Functions as a chaperone, binding to this subunit within the mitochondrial matrix and stabilizing it prior to its translocation and insertion into the late CIII dimeric intermediate within the mitochondrial inner membrane. The protein is Complex III assembly factor LYRM7 (Lyrm7) of Rattus norvegicus (Rat).